The sequence spans 252 residues: Phosphate import ATP-binding protein PstB (252 aa).

Residues 5 to 247 form the ABC transporter domain; sequence LIASDVNIFY…PRDERTEAYV (243 aa). 37–44 contributes to the ATP binding site; that stretch reads GPSGCGKT.

It belongs to the ABC transporter superfamily. Phosphate importer (TC 3.A.1.7) family. The complex is composed of two ATP-binding proteins (PstB), two transmembrane proteins (PstC and PstA) and a solute-binding protein (PstS).

The protein resides in the cell membrane. It catalyses the reaction phosphate(out) + ATP + H2O = ADP + 2 phosphate(in) + H(+). Functionally, part of the ABC transporter complex PstSACB involved in phosphate import. Responsible for energy coupling to the transport system. In Deinococcus geothermalis (strain DSM 11300 / CIP 105573 / AG-3a), this protein is Phosphate import ATP-binding protein PstB.